Here is a 37-residue protein sequence, read N- to C-terminus: Large ribosomal subunit protein bL36 (37 aa).

It belongs to the bacterial ribosomal protein bL36 family.

This is Large ribosomal subunit protein bL36 from Mycobacteroides abscessus (strain ATCC 19977 / DSM 44196 / CCUG 20993 / CIP 104536 / JCM 13569 / NCTC 13031 / TMC 1543 / L948) (Mycobacterium abscessus).